The primary structure comprises 858 residues: DNA mismatch repair protein MutS (858 aa).

637–644 (GPNMAGKS) is a binding site for ATP.

The protein belongs to the DNA mismatch repair MutS family.

In terms of biological role, this protein is involved in the repair of mismatches in DNA. It is possible that it carries out the mismatch recognition step. This protein has a weak ATPase activity. This Protochlamydia amoebophila (strain UWE25) protein is DNA mismatch repair protein MutS.